Here is a 126-residue protein sequence, read N- to C-terminus: Small ribosomal subunit protein uS13 (126 aa).

Residues glycine 95–lysine 126 are disordered.

It belongs to the universal ribosomal protein uS13 family. In terms of assembly, part of the 30S ribosomal subunit. Forms a loose heterodimer with protein S19. Forms two bridges to the 50S subunit in the 70S ribosome.

In terms of biological role, located at the top of the head of the 30S subunit, it contacts several helices of the 16S rRNA. In the 70S ribosome it contacts the 23S rRNA (bridge B1a) and protein L5 of the 50S subunit (bridge B1b), connecting the 2 subunits; these bridges are implicated in subunit movement. Contacts the tRNAs in the A and P-sites. The polypeptide is Small ribosomal subunit protein uS13 (Acidothermus cellulolyticus (strain ATCC 43068 / DSM 8971 / 11B)).